Consider the following 489-residue polypeptide: Putative (R)-citramalate synthase CimA (489 aa).

Residues 3–255 (VKILDTTLRD…KTKIKKERLY (253 aa)) enclose the Pyruvate carboxyltransferase domain.

This sequence belongs to the alpha-IPM synthase/homocitrate synthase family. Homodimer.

It carries out the reaction pyruvate + acetyl-CoA + H2O = (3R)-citramalate + CoA + H(+). The protein operates within amino-acid biosynthesis; L-isoleucine biosynthesis; 2-oxobutanoate from pyruvate: step 1/3. Functionally, catalyzes the condensation of pyruvate and acetyl-coenzyme A to form (R)-citramalate. The sequence is that of Putative (R)-citramalate synthase CimA (cimA) from Archaeoglobus fulgidus (strain ATCC 49558 / DSM 4304 / JCM 9628 / NBRC 100126 / VC-16).